Reading from the N-terminus, the 259-residue chain is Phosphatidylserine decarboxylase proenzyme (259 aa).

Catalysis depends on Ser183, which acts as the Schiff-base intermediate with substrate; via pyruvic acid. A Pyruvic acid (Ser); by autocatalysis modification is found at Ser183.

It belongs to the phosphatidylserine decarboxylase family. PSD-A subfamily. In terms of assembly, heterodimer of a large membrane-associated beta subunit and a small pyruvoyl-containing alpha subunit. Pyruvate serves as cofactor. In terms of processing, is synthesized initially as an inactive proenzyme. Formation of the active enzyme involves a self-maturation process in which the active site pyruvoyl group is generated from an internal serine residue via an autocatalytic post-translational modification. Two non-identical subunits are generated from the proenzyme in this reaction, and the pyruvate is formed at the N-terminus of the alpha chain, which is derived from the carboxyl end of the proenzyme. The post-translation cleavage follows an unusual pathway, termed non-hydrolytic serinolysis, in which the side chain hydroxyl group of the serine supplies its oxygen atom to form the C-terminus of the beta chain, while the remainder of the serine residue undergoes an oxidative deamination to produce ammonia and the pyruvoyl prosthetic group on the alpha chain.

The protein resides in the cell membrane. The enzyme catalyses a 1,2-diacyl-sn-glycero-3-phospho-L-serine + H(+) = a 1,2-diacyl-sn-glycero-3-phosphoethanolamine + CO2. Its pathway is phospholipid metabolism; phosphatidylethanolamine biosynthesis; phosphatidylethanolamine from CDP-diacylglycerol: step 2/2. Functionally, catalyzes the formation of phosphatidylethanolamine (PtdEtn) from phosphatidylserine (PtdSer). The chain is Phosphatidylserine decarboxylase proenzyme from Neisseria gonorrhoeae (strain ATCC 700825 / FA 1090).